The primary structure comprises 261 residues: Transcription factor BEE 3 (261 aa).

Over residues 72–82 the composition is skewed to low complexity; it reads NIQNNEESSSQ. 2 disordered regions span residues 72–158 and 242–261; these read NIQN…TDSH and VEMG…SWTL. Polar residues predominate over residues 95-123; it reads VSTSENSVSDQTLSTSSAQVSINGNISTK. The span at 135-146 shows a compositional bias: basic and acidic residues; it reads NREEEKEREVVH. In terms of domain architecture, bHLH spans 153-203; sequence QATDSHSIAERVRRGKINERLKCLQDIVPGCYKTMGMATMLDEIINYVQSL.

Homodimer. In terms of tissue distribution, expressed in stems.

It is found in the nucleus. Its function is as follows. Positive regulator of brassinosteroid signaling. This Arabidopsis thaliana (Mouse-ear cress) protein is Transcription factor BEE 3 (BEE3).